A 380-amino-acid polypeptide reads, in one-letter code: Succinyl-diaminopimelate desuccinylase (380 aa).

Residue H69 coordinates Zn(2+). D71 is an active-site residue. D102 is a Zn(2+) binding site. The active-site Proton acceptor is the E135. Residues E136, E164, and H353 each contribute to the Zn(2+) site.

This sequence belongs to the peptidase M20A family. DapE subfamily. In terms of assembly, homodimer. The cofactor is Zn(2+). Co(2+) is required as a cofactor.

It carries out the reaction N-succinyl-(2S,6S)-2,6-diaminopimelate + H2O = (2S,6S)-2,6-diaminopimelate + succinate. It participates in amino-acid biosynthesis; L-lysine biosynthesis via DAP pathway; LL-2,6-diaminopimelate from (S)-tetrahydrodipicolinate (succinylase route): step 3/3. Its function is as follows. Catalyzes the hydrolysis of N-succinyl-L,L-diaminopimelic acid (SDAP), forming succinate and LL-2,6-diaminopimelate (DAP), an intermediate involved in the bacterial biosynthesis of lysine and meso-diaminopimelic acid, an essential component of bacterial cell walls. In Cereibacter sphaeroides (strain ATCC 17023 / DSM 158 / JCM 6121 / CCUG 31486 / LMG 2827 / NBRC 12203 / NCIMB 8253 / ATH 2.4.1.) (Rhodobacter sphaeroides), this protein is Succinyl-diaminopimelate desuccinylase.